A 134-amino-acid chain; its full sequence is Lymphocyte antigen 6I (134 aa).

The signal sequence occupies residues 1–21 (MDTSHAIKSCVLILLVTLLCA). The UPAR/Ly6 domain occupies 27–105 (LECYQCYGVP…ISCCQEDLCN (79 aa)). Disulfide bonds link Cys-29–Cys-53, Cys-32–Cys-41, Cys-46–Cys-74, Cys-78–Cys-98, and Cys-99–Cys-104. An N-linked (GlcNAc...) asparagine glycan is attached at Asn-95. The GPI-anchor amidated glycine moiety is linked to residue Gly-112. A propeptide spans 113–134 (SSWTTAGVLLFSLGSVLLQTLM) (removed in mature form).

Expressed in hematopoietic tissue (spleen, thymus, bone marrow). Also found in peritoneal macrophages, peripheral blood leukocytes, liver, heart, brain, kidney and lung.

It is found in the cell membrane. The chain is Lymphocyte antigen 6I (Ly6i) from Mus musculus (Mouse).